Here is a 445-residue protein sequence, read N- to C-terminus: Peptide chain release factor 1, mitochondrial (445 aa).

Residues 1–61 constitute a mitochondrion transit peptide; sequence MNRHLCVWLF…LLSKNWSRRY (61 aa). The tract at residues 297 to 361 is GGQ domain; that stretch reads PKDLRIDTFR…LRARLYQQII (65 aa). The short motif at 311-313 is the GGQ element; sequence GGQ. At Gln-313 the chain carries N5-methylglutamine.

This sequence belongs to the prokaryotic/mitochondrial release factor family. Post-translationally, methylation of glutamine in the GGQ triplet by HEMK1 is conserved from bacteria to mammals.

It is found in the mitochondrion. In terms of biological role, mitochondrial peptide chain release factor that directs the termination of translation in response to the peptide chain non-canonical stop codons AGG and AGA. Non-canonical termination codons AGG and AGA are found at the end of MT-CO1/COX1 and MT-ND6/ND6 open reading frames, respectively. Recognizes non-canonical stop codons via a network of interactions between the codon, MTRF1 and the ribosomal RNA (rRNA): in contrast to other translation release factors, which identify the codon in the A-site via direct interactions of amino acid side chains with the bases, MTRF1 repositions the first 2 bases of the stop codon to use an intricate network of interactions that includes residues of the release factor, the rRNA of the small ribosomal subunit, as well as neighboring bases of the mRNA. The protein is Peptide chain release factor 1, mitochondrial of Homo sapiens (Human).